The following is a 340-amino-acid chain: Methionine import ATP-binding protein MetN (340 aa).

The region spanning 8–246 is the ABC transporter domain; it reads ISVKNLNKEI…PYSSITEELF (239 aa). Residue 40 to 47 participates in ATP binding; it reads GHSGSGKS.

The protein belongs to the ABC transporter superfamily. Methionine importer (TC 3.A.1.24) family. As to quaternary structure, the complex is composed of two ATP-binding proteins (MetN), two transmembrane proteins (MetI) and a solute-binding protein (MetQ).

It localises to the cell inner membrane. The catalysed reaction is L-methionine(out) + ATP + H2O = L-methionine(in) + ADP + phosphate + H(+). The enzyme catalyses D-methionine(out) + ATP + H2O = D-methionine(in) + ADP + phosphate + H(+). Functionally, part of the ABC transporter complex MetNIQ involved in methionine import. Responsible for energy coupling to the transport system. In Chlamydia felis (strain Fe/C-56) (Chlamydophila felis), this protein is Methionine import ATP-binding protein MetN.